Consider the following 513-residue polypeptide: Nitrate transporter 2.2 (513 aa).

The next 12 membrane-spanning stretches (helical) occupy residues 38–58, 74–94, 98–118, 128–148, 158–178, 196–216, 247–265, 281–301, 323–343, 351–371, 383–403, and 419–439; these read WICF…APVI, VSAV…VDVV, YGAA…ALVT, FFIG…GTMF, AIAA…MPLI, AFFV…LLGI, LGNY…SFGV, FGLN…MNIF, LWVL…MGKV, IVIM…HFGI, VSGL…AIWF, and FVWM…IWFP.

The protein belongs to the major facilitator superfamily. Nitrate/nitrite porter (TC 2.A.1.8) family.

Its subcellular location is the cell membrane. Its function is as follows. Involved in nitrate transport, but does not seem to be able to mediate transport by its own. Acts as a dual component transporter with NAR2 (system 2). Involved in a high affinity transport specific for nitrate. The chain is Nitrate transporter 2.2 from Chlamydomonas reinhardtii (Chlamydomonas smithii).